Consider the following 52-residue polypeptide: Eukaryotic translation initiation factor 5A (52 aa).

Lysine 42 bears the Hypusine mark.

The protein belongs to the eIF-5A family. In terms of processing, lys-42 undergoes hypusination, a unique post-translational modification that consists in the addition of a butylamino group from spermidine to lysine side chain, leading to the formation of the unusual amino acid hypusine. eIF-5As are the only known proteins to undergo this modification, which is essential for their function.

It localises to the cytoplasm. Functionally, translation factor that promotes translation elongation and termination, particularly upon ribosome stalling at specific amino acid sequence contexts. Binds between the exit (E) and peptidyl (P) site of the ribosome and promotes rescue of stalled ribosome: specifically required for efficient translation of polyproline-containing peptides as well as other motifs that stall the ribosome. Acts as a ribosome quality control (RQC) cofactor by joining the RQC complex to facilitate peptidyl transfer during CAT tailing step. The chain is Eukaryotic translation initiation factor 5A from Schistosoma mansoni (Blood fluke).